The primary structure comprises 119 residues: Anamorsin homolog (119 aa).

The segment at 33 to 119 (LKQATKGEDC…KVKLNLTDDI (87 aa)) is disordered. C42, C49, C52, and C54 together coordinate [2Fe-2S] cluster. The tract at residues 42–54 (CTTRRRACKNCVC) is fe-S binding site A. Positions 81, 84, 92, and 95 each coordinate [4Fe-4S] cluster. 2 short sequence motifs (cx2C motif) span residues 81 to 84 (CGNC) and 92 to 95 (CANC). Residues 81–95 (CGNCAKGDAFRCANC) form a fe-S binding site B region.

The protein belongs to the anamorsin family. As to quaternary structure, monomer. It depends on [2Fe-2S] cluster as a cofactor. The cofactor is [4Fe-4S] cluster.

The protein localises to the cytoplasm. It is found in the mitochondrion intermembrane space. In terms of biological role, component of the cytosolic iron-sulfur (Fe-S) protein assembly (CIA) machinery. Required for the maturation of extramitochondrial Fe-S proteins. Part of an electron transfer chain functioning in an early step of cytosolic Fe-S biogenesis, facilitating the de novo assembly of a [4Fe-4S] cluster on the cytosolic Fe-S scaffold complex. Electrons are transferred from NADPH via a FAD- and FMN-containing diflavin oxidoreductase. Together with the diflavin oxidoreductase, also required for the assembly of the diferric tyrosyl radical cofactor of ribonucleotide reductase (RNR), probably by providing electrons for reduction during radical cofactor maturation in the catalytic small subunit. This is Anamorsin homolog from Leishmania braziliensis.